We begin with the raw amino-acid sequence, 319 residues long: L-threo-3-hydroxyaspartate ammonia-lyase (319 aa).

Position 53 is an N6-(pyridoxal phosphate)lysine (lysine 53). Pyridoxal 5'-phosphate contacts are provided by residues asparagine 80, 179 to 183, and threonine 304; that span reads GGGGM.

This sequence belongs to the serine/threonine dehydratase family. As to quaternary structure, may be either a monomer or a homodimer. It depends on pyridoxal 5'-phosphate as a cofactor. The cofactor is Mn(2+). Mg(2+) is required as a cofactor. Requires Ca(2+) as cofactor.

The catalysed reaction is (3S)-3-hydroxy-L-aspartate = oxaloacetate + NH4(+). Is strongly inhibited by hydroxylamine and EDTA in vitro. Functionally, catalyzes the deamination of L-threo-3-hydroxyaspartate to oxaloacetate and ammonia. Shows a high specificity towards L-threo-3-hydroxyaspartate as other 3-hydroxyaminoacids, i.e. D,L-erythro- and D-threo-3-hydroxyaspartate, D-threonine, L-threonine, D,L-allothreonine, D,L-threo-3-phenylserine, D-serine, and L-serine, are not substrates for this enzyme. Exhibits no detectable serine and aspartate racemase activity. Might play a role in the detoxification of naturally occurring 3-hydroxyaspartate in Pseudomonas sp. T62 cells. The chain is L-threo-3-hydroxyaspartate ammonia-lyase from Pseudomonas sp.